The following is a 221-amino-acid chain: UPF0758 protein ECA0145 (221 aa).

The MPN domain maps to 99-221 (AMLNPEATGQ…FVSFAERGWI (123 aa)). Residues His170, His172, and Asp183 each coordinate Zn(2+). The JAMM motif signature appears at 170–183 (HNHPSGKAEPSQAD).

This sequence belongs to the UPF0758 family. YicR subfamily.

This is UPF0758 protein ECA0145 from Pectobacterium atrosepticum (strain SCRI 1043 / ATCC BAA-672) (Erwinia carotovora subsp. atroseptica).